The sequence spans 356 residues: MDATYVGAYGRLKVYEVDFLKKDFLEHLISLDKPSDFSSVLYASVYKEDYDALTSIYREPDLTEMAINRHLVRMNRIAAFAIPPLAKNALTAYISKWDIENIKTVISSKFLGHGLKETEMFIVSFRDIPMGLIGGVLTNEDYRNMMNLPNVEAIINYLTRYGYGSYMLQFIEDYRKTGDISPMLYSLDRYYYARLLESLKYYNGDEGPVINYIRSDIDRINLNTILKGKKLNISYERFFSGLVDGGNIPINAIHDFYGNSDILSMIDSIKRYYDLEDAKNKYASDGNLYHFDVSMRNIMITKYMGTMSMLPLSLDSIFYFIIRAEIERQNLRTIYEAKLHGAPKESIYDLMINGVV.

It belongs to the V-ATPase V0D/AC39 subunit family. Has multiple subunits with at least A(3), B(3), C, D, E, F, H, I and proteolipid K(x).

The protein localises to the cell membrane. Its function is as follows. Component of the A-type ATP synthase that produces ATP from ADP in the presence of a proton gradient across the membrane. The sequence is that of A-type ATP synthase subunit C from Thermoplasma volcanium (strain ATCC 51530 / DSM 4299 / JCM 9571 / NBRC 15438 / GSS1).